The following is a 431-amino-acid chain: Histidine--tRNA ligase (431 aa).

This sequence belongs to the class-II aminoacyl-tRNA synthetase family. As to quaternary structure, homodimer.

The protein localises to the cytoplasm. It carries out the reaction tRNA(His) + L-histidine + ATP = L-histidyl-tRNA(His) + AMP + diphosphate + H(+). This Neisseria meningitidis serogroup A / serotype 4A (strain DSM 15465 / Z2491) protein is Histidine--tRNA ligase.